The chain runs to 183 residues: 2-epi-5-epi-valiolone epimerase (183 aa).

Positions 11–155 (AVHHVAYTVP…WGMQLELINL (145 aa)) constitute a VOC domain. A divalent metal cation-binding residues include H14, E76, H99, and E151.

Homodimer. Requires a divalent metal cation as cofactor.

The catalysed reaction is 2-epi-5-epi-valiolone = 5-epi-valiolone. It functions in the pathway antibiotic biosynthesis. Catalyzes the epimerization of 2-epi-5-epi-valiolone to 5-epi-valiolone. Involved in cetoniacytone A biosynthesis. The sequence is that of 2-epi-5-epi-valiolone epimerase from Actinomyces sp.